The sequence spans 113 residues: uncharacterized protein (113 aa).

The 55-residue stretch at Leu16 to Trp70 folds into the HTH cro/C1-type domain. A DNA-binding region (H-T-H motif) is located at residues Ile27–Asn46.

Belongs to the VapA/VapI family.

This is an uncharacterized protein from Escherichia coli O6:H1 (strain CFT073 / ATCC 700928 / UPEC).